Consider the following 280-residue polypeptide: Foldase protein PrsA 4 (280 aa).

Residues 1 to 21 form the signal peptide; the sequence is MKRKKLVIGSILMGMTLSLSA. A lipid anchor (N-palmitoyl cysteine) is attached at cysteine 22. Cysteine 22 is lipidated: S-diacylglycerol cysteine. The PpiC domain maps to 132-222; sequence KPKLQVSHIL…FGYHIIKLTD (91 aa).

It belongs to the PrsA family.

The protein resides in the cell membrane. It carries out the reaction [protein]-peptidylproline (omega=180) = [protein]-peptidylproline (omega=0). Its function is as follows. Plays a major role in protein secretion by helping the post-translocational extracellular folding of several secreted proteins. The chain is Foldase protein PrsA 4 (prsA4) from Bacillus cereus (strain ATCC 14579 / DSM 31 / CCUG 7414 / JCM 2152 / NBRC 15305 / NCIMB 9373 / NCTC 2599 / NRRL B-3711).